The following is a 973-amino-acid chain: UvrABC system protein A (973 aa).

Residue 34 to 41 (GLSGSGKS) participates in ATP binding. 2 ABC transporter domains span residues 331 to 609 (WAKS…PKSL) and 629 to 958 (PKKK…QFLK). An ATP-binding site is contributed by 662 to 669 (GVSGGGKS). The C4-type zinc-finger motif lies at 761–787 (CEACQGDGVIKIEMHFLPDVYVTCDVC).

Belongs to the ABC transporter superfamily. UvrA family. In terms of assembly, forms a heterotetramer with UvrB during the search for lesions.

The protein resides in the cytoplasm. Functionally, the UvrABC repair system catalyzes the recognition and processing of DNA lesions. UvrA is an ATPase and a DNA-binding protein. A damage recognition complex composed of 2 UvrA and 2 UvrB subunits scans DNA for abnormalities. When the presence of a lesion has been verified by UvrB, the UvrA molecules dissociate. The sequence is that of UvrABC system protein A from Rhizobium meliloti (strain 1021) (Ensifer meliloti).